A 127-amino-acid polypeptide reads, in one-letter code: Venom protein family 16 protein 1 (127 aa).

Residues 1–18 (MWIWYSLLFFGVCHLAHS) form the signal peptide.

Expressed by the venom gland (anterior main gland) (at protein level).

The protein resides in the secreted. The polypeptide is Venom protein family 16 protein 1 (Platymeris rhadamanthus (Red spot assassin bug)).